The following is a 224-amino-acid chain: MKIAVLGGTGDQGLGLALRLALAGEEVIIGSRDAEKAVSAAQKVLEIAERDDLKVKGATNAEAAEEAEVAILTVPLQAQMATLGSVKEAIKGKVLIDATVPIDSCLGGSAVRYIDLWDGSAAERAARFLEDQGTRVAAAFNNISASALLDITGPVDCDCLIASDHRDALDLASELAEKIDGVRAIDCGGLENARVIEKITPLLINLNIKNRIRNAGIRITNLPE.

NADP(+) is bound by residues 9-12 (TGDQ), 31-32 (SR), lysine 36, valine 74, valine 100, and alanine 145.

This sequence belongs to the F420-dependent NADP reductase family. In terms of assembly, homotetramer.

The catalysed reaction is reduced coenzyme F420-(gamma-L-Glu)(n) + NADP(+) = oxidized coenzyme F420-(gamma-L-Glu)(n) + NADPH + 2 H(+). In terms of biological role, catalyzes the reduction of NADP(+) with F420H(2) via hydride transfer, and the reverse reaction, i.e. the reduction of F420 with NADPH. Probably functions in the regeneration of NADPH required in biosynthetic reactions. The chain is F420-dependent NADP reductase from Methanothermobacter marburgensis (strain ATCC BAA-927 / DSM 2133 / JCM 14651 / NBRC 100331 / OCM 82 / Marburg) (Methanobacterium thermoautotrophicum).